The following is a 295-amino-acid chain: Bifunctional protein FolD (295 aa).

Residues 165-167, serine 190, and isoleucine 231 each bind NADP(+); that span reads GRS.

Belongs to the tetrahydrofolate dehydrogenase/cyclohydrolase family. Homodimer.

The catalysed reaction is (6R)-5,10-methylene-5,6,7,8-tetrahydrofolate + NADP(+) = (6R)-5,10-methenyltetrahydrofolate + NADPH. It carries out the reaction (6R)-5,10-methenyltetrahydrofolate + H2O = (6R)-10-formyltetrahydrofolate + H(+). It functions in the pathway one-carbon metabolism; tetrahydrofolate interconversion. In terms of biological role, catalyzes the oxidation of 5,10-methylenetetrahydrofolate to 5,10-methenyltetrahydrofolate and then the hydrolysis of 5,10-methenyltetrahydrofolate to 10-formyltetrahydrofolate. The sequence is that of Bifunctional protein FolD from Nitrosomonas europaea (strain ATCC 19718 / CIP 103999 / KCTC 2705 / NBRC 14298).